Reading from the N-terminus, the 117-residue chain is Dolichyl-diphosphooligosaccharide--protein glycosyltransferase subunit DAD1 (117 aa).

The Cytoplasmic segment spans residues 1–33 (MAKTSSTTKDAQDLFHAIWSAYSATPTNLKIID). The chain crosses the membrane as a helical span at residues 34 to 54 (LYVVFAVFTALLQDVYMALVG). Residues 55 to 57 (PFP) lie on the Lumenal side of the membrane. A helical membrane pass occupies residues 58–78 (FNSFLSGVLSCVGTAVLAVCL). At 79 to 96 (RIQVNKENKEFKDLGPER) the chain is on the cytoplasmic side. Residues 97–117 (AFADFVLCNLVLHLVIMNFLG) traverse the membrane as a helical segment.

The protein belongs to the DAD/OST2 family. Component of the oligosaccharyltransferase (OST) complex.

The protein resides in the endoplasmic reticulum membrane. The protein operates within protein modification; protein glycosylation. Functionally, subunit of the oligosaccharyl transferase (OST) complex that catalyzes the initial transfer of a defined glycan (Glc(3)Man(9)GlcNAc(2) in eukaryotes) from the lipid carrier dolichol-pyrophosphate to an asparagine residue within an Asn-X-Ser/Thr consensus motif in nascent polypeptide chains, the first step in protein N-glycosylation. N-glycosylation occurs cotranslationally and the complex associates with the Sec61 complex at the channel-forming translocon complex that mediates protein translocation across the endoplasmic reticulum (ER). All subunits are required for a maximal enzyme activity. The chain is Dolichyl-diphosphooligosaccharide--protein glycosyltransferase subunit DAD1 (DAD1) from Pisum sativum (Garden pea).